The primary structure comprises 347 residues: Geranylgeranyl pyrophosphate synthase 7, chloroplastic (347 aa).

Residues 1–39 (MTTLNLSIFPSVKISSSASIPGFIKIQPFLLRRKLSTVL) constitute a chloroplast transit peptide. Residues lysine 95, arginine 98, and histidine 127 each coordinate isopentenyl diphosphate. 2 residues coordinate Mg(2+): aspartate 134 and aspartate 140. Arginine 145 contributes to the dimethylallyl diphosphate binding site. Arginine 146 lines the isopentenyl diphosphate pocket. Residues lysine 232, threonine 233, glutamine 270, lysine 287, and lysine 297 each contribute to the dimethylallyl diphosphate site.

It belongs to the FPP/GGPP synthase family. As to quaternary structure, monomer. Mg(2+) serves as cofactor.

It localises to the plastid. The protein resides in the chloroplast. The catalysed reaction is isopentenyl diphosphate + dimethylallyl diphosphate = (2E)-geranyl diphosphate + diphosphate. It carries out the reaction isopentenyl diphosphate + (2E)-geranyl diphosphate = (2E,6E)-farnesyl diphosphate + diphosphate. It catalyses the reaction isopentenyl diphosphate + (2E,6E)-farnesyl diphosphate = (2E,6E,10E)-geranylgeranyl diphosphate + diphosphate. It participates in isoprenoid biosynthesis; farnesyl diphosphate biosynthesis; farnesyl diphosphate from geranyl diphosphate and isopentenyl diphosphate: step 1/1. The protein operates within isoprenoid biosynthesis; geranyl diphosphate biosynthesis; geranyl diphosphate from dimethylallyl diphosphate and isopentenyl diphosphate: step 1/1. It functions in the pathway isoprenoid biosynthesis; geranylgeranyl diphosphate biosynthesis; geranylgeranyl diphosphate from farnesyl diphosphate and isopentenyl diphosphate: step 1/1. Catalyzes the trans-addition of the three molecules of IPP onto DMAPP to form geranylgeranyl pyrophosphate. This chain is Geranylgeranyl pyrophosphate synthase 7, chloroplastic, found in Arabidopsis thaliana (Mouse-ear cress).